We begin with the raw amino-acid sequence, 809 residues long: ATP-dependent zinc metalloprotease FTSH 3, mitochondrial (809 aa).

A mitochondrion-targeting transit peptide spans 1-83; that stretch reads MTMIFFSKLN…FANPRLRRFF (83 aa). Positions 93 to 121 are enriched in basic and acidic residues; that stretch reads YENYFPKDKQEPKSDQKSEHKEGSEKNEN. Residues 93–122 are disordered; that stretch reads YENYFPKDKQEPKSDQKSEHKEGSEKNENE. The helical transmembrane segment at 132 to 152 threads the bilayer; sequence FQNLLIPLLALAVFFSTFSFG. 362–369 serves as a coordination point for ATP; that stretch reads GPPGTGKT. His-586 contacts Zn(2+). Glu-587 is a catalytic residue. Residues His-590 and Asp-662 each coordinate Zn(2+). Residues 776–809 are disordered; it reads GFEETEKDSAATPTVEPVVDDGAPPPFEPQVVPT.

It in the N-terminal section; belongs to the AAA ATPase family. In the C-terminal section; belongs to the peptidase M41 family. It depends on Zn(2+) as a cofactor.

It is found in the mitochondrion inner membrane. Its function is as follows. Probable ATP-dependent zinc metallopeptidase. Involved in the assembly and/or stability of the complexes I and V of the mitochondrial oxidative phosphorylation system. The chain is ATP-dependent zinc metalloprotease FTSH 3, mitochondrial (FTSH3) from Arabidopsis thaliana (Mouse-ear cress).